Here is a 279-residue protein sequence, read N- to C-terminus: NADPH-dependent 7-cyano-7-deazaguanine reductase (279 aa).

86–88 lines the substrate pocket; that stretch reads IES. 88 to 89 contributes to the NADPH binding site; it reads SK. Cys-187 acts as the Thioimide intermediate in catalysis. The Proton donor role is filled by Asp-194. 226 to 227 lines the substrate pocket; the sequence is HE. 255-256 contributes to the NADPH binding site; the sequence is RG.

The protein belongs to the GTP cyclohydrolase I family. QueF type 2 subfamily. In terms of assembly, homodimer.

Its subcellular location is the cytoplasm. The catalysed reaction is 7-aminomethyl-7-carbaguanine + 2 NADP(+) = 7-cyano-7-deazaguanine + 2 NADPH + 3 H(+). Its pathway is tRNA modification; tRNA-queuosine biosynthesis. Its function is as follows. Catalyzes the NADPH-dependent reduction of 7-cyano-7-deazaguanine (preQ0) to 7-aminomethyl-7-deazaguanine (preQ1). This chain is NADPH-dependent 7-cyano-7-deazaguanine reductase, found in Histophilus somni (strain 129Pt) (Haemophilus somnus).